The following is a 283-amino-acid chain: Extensin (283 aa).

Positions 1–24 (MMGGKAALLLALVAVTLAVVEIQA) are cleaved as a signal peptide. The segment at 27–283 (GYGYGGGYPT…PPPPPPPPYY (257 aa)) is disordered. A compositionally biased stretch (pro residues) spans 36 to 45 (TPTPKPPAKG). Positions 46-69 (PKPEKPPTKGHGHKPEKPPKEHKP) are enriched in basic and acidic residues. Composition is skewed to pro residues over residues 70-264 (TPPT…PTYT) and 272-283 (SSPPPPPPPPYY).

Post-translationally, hydroxylated on proline residues in the S-P-P-P-P repeat. O-glycosylated on hydroxyprolines.

It localises to the secreted. Its subcellular location is the primary cell wall. Its function is as follows. Structural component in primary cell wall. The polypeptide is Extensin (HRGP) (Sorghum bicolor (Sorghum)).